The primary structure comprises 258 residues: Aquaglyceroporin (258 aa).

Residues 1–16 are Cytoplasmic-facing; the sequence is MKVTFGNEYIKNFLGE. A helical membrane pass occupies residues 17–37; the sequence is FIGTFVLMFLGEGTTANHFAV. Over 38–45 the chain is Extracellular; it reads PIKNDWLR. Residues 46–66 form a helical membrane-spanning segment; the sequence is LCIGWGLGVFFGILISAKLSG. Glycerol contacts are provided by Ala-67 and Asn-70. The Cytoplasmic segment spans residues 67-87; the sequence is AHLNLAVTVGLSTIKKFNYKQ. The helical transmembrane segment at 88-108 threads the bilayer; it reads IPLYFAGQLLGALSATASVYG. Residues 109–133 are Extracellular-facing; that stretch reads LYYGFVSDQTIPKFSWETGKHANVH. The helical transmembrane segment at 134 to 154 threads the bilayer; that stretch reads IASAFMHEFILTGILLLIILS. At 155 to 171 the chain is on the cytoplasmic side; the sequence is VTDENICGKFHVLKVSS. A helical transmembrane segment spans residues 172–192; that stretch reads IVGLAIICIGISFGGNTGFAL. 4 residues coordinate glycerol: Gly-189, Phe-190, Asn-193, and Arg-196. Residues 193 to 217 lie on the Extracellular side of the membrane; it reads NPSRDLGARILSAIAYGFEAFTRDK. The helical transmembrane segment at 218–238 threads the bilayer; it reads CYFWIPLIAPIIGSIIFCQIY. Residues 239 to 258 are Cytoplasmic-facing; sequence DKIVAPLVVISEHDKGALEI.

It belongs to the MIP/aquaporin (TC 1.A.8) family.

It is found in the cell membrane. It catalyses the reaction H2O(in) = H2O(out). The catalysed reaction is glycerol(in) = glycerol(out). The enzyme catalyses urea(in) = urea(out). Functionally, mediates water and glycerol transport across the cell membrane. Permeable to urea. Required for efficient progression of parasites through the liver stages. In Plasmodium berghei (strain Anka), this protein is Aquaglyceroporin.